Consider the following 243-residue polypeptide: Outer membrane protein A (243 aa).

Beta stranded transmembrane passes span 1–8 (LTAKLGYP), 13–21 (LDIYTRLGG), 48–57 (PVFAGGVEWA), 62–69 (IATRLEYQ), and 88–96 (LLSLGVSYR). Tandem repeats lie at residues 107 to 108 (AP), 109 to 110 (AP), 111 to 112 (AP), and 113 to 114 (AP). The interval 107 to 114 (APAPAPAP) is 4 X 2 AA tandem repeats of A-P. In terms of domain architecture, OmpA-like spans 116–243 (VQTKHFTLKS…RRVEIEVKGI (128 aa)). Cysteines 217 and 229 form a disulfide.

This sequence belongs to the outer membrane OOP (TC 1.B.6) superfamily. OmpA family. In terms of assembly, monomer and homodimer.

Its subcellular location is the cell outer membrane. In terms of biological role, with TolR probably plays a role in maintaining the position of the peptidoglycan cell wall in the periplasm. Acts as a porin with low permeability that allows slow penetration of small solutes; an internal gate slows down solute passage. Required for conjugation with F-type plasmids; probably serves as the mating receptor on recipient cells. This chain is Outer membrane protein A, found in Escherichia fergusonii.